The chain runs to 375 residues: Growth/differentiation factor 8 (375 aa).

Residues 1-23 (MQKLAVYVYIYLFMQIAVDPVAL) form the signal peptide. A propeptide spanning residues 24–266 (DGSSQPTENA…VTDTPKRSRR (243 aa)) is cleaved from the precursor. Asn-71 is a glycosylation site (N-linked (GlcNAc...) asparagine). 4 cysteine pairs are disulfide-bonded: Cys-272/Cys-282, Cys-281/Cys-340, Cys-309/Cys-372, and Cys-313/Cys-374.

The protein belongs to the TGF-beta family. Homodimer; disulfide-linked.

It localises to the secreted. Acts specifically as a negative regulator of skeletal muscle growth. In Gallus gallus (Chicken), this protein is Growth/differentiation factor 8 (MSTN).